A 552-amino-acid chain; its full sequence is Transcription factor lcsF (552 aa).

Disordered regions lie at residues 1 to 132 (MAPA…DLDP), 169 to 209 (TSSY…ASLS), 232 to 258 (EATS…HWSS), and 297 to 349 (ELTS…QHGA). The basic motif stretch occupies residues 31 to 55 (KDRKEKKRIQNRVAQRSYRSRMKAR). The bZIP domain occupies 31–76 (KDRKEKKRIQNRVAQRSYRSRMKARLGELQSRLQAHEEQKAKEEAE). Residues 56–63 (LGELQSRL) are leucine-zipper. Basic and acidic residues predominate over residues 64–79 (QAHEEQKAKEEAERCD). Composition is skewed to polar residues over residues 98–119 (TPPS…NSAS) and 169–186 (TSSY…SLSQ). The segment covering 298 to 347 (LTSTGDLPNATWRPSQQFSGPETTPRSHNAENPTQQQSPINDDTPSTTQH) has biased composition (polar residues).

The protein belongs to the bZIP family.

Its subcellular location is the nucleus. Transcription factor that regulates the expression of the gene cluster that mediates the biosynthesis of the lipopeptide antibiotics leucinostatins that show extensive biological activities, including antimalarial, antiviral, antibacterial, antifungal, and antitumor activities, as well as phytotoxic. All 20 genes in the cluster are up-regulated to some extent by lcsF, with the exception of lcsL and lcsP, which are down-regulated. This Purpureocillium lilacinum (Paecilomyces lilacinus) protein is Transcription factor lcsF.